The following is a 1282-amino-acid chain: Ribosome biogenesis protein BMS1 homolog (1282 aa).

Residues 1 to 24 show a composition bias toward basic residues; it reads MEAKDQKKHRKKNSGPKAAKKKKR. Residues 1–43 are disordered; that stretch reads MEAKDQKKHRKKNSGPKAAKKKKRLLQDLQLGDEEDARKRNPK. A Glycyl lysine isopeptide (Lys-Gly) (interchain with G-Cter in SUMO2) cross-link involves residue Lys43. One can recognise a Bms1-type G domain in the interval 80-245; it reads PPPIVVVVMG…GRFITVMKFR (166 aa). A G1 region spans residues 89–96; it reads GPPKVGKS. ATP is bound at residue 89 to 96; that stretch reads GPPKVGKS. The segment at 117-121 is G2; sequence PVTIV. The G3 stretch occupies residues 132–135; that stretch reads ECGC. The tract at residues 184–187 is G4; that stretch reads THLD. The residue at position 188 (Ser188) is a Phosphoserine. The G5 stretch occupies residues 219–228; that stretch reads LSGMVHGEYQ. Disordered stretches follow at residues 397–557 and 575–667; these read DSKP…ANCQ and PTFD…ALKW. Residues Lys399 and Lys415 each participate in a glycyl lysine isopeptide (Lys-Gly) (interchain with G-Cter in SUMO2) cross-link. Acidic residues-rich tracts occupy residues 434 to 472 and 503 to 531; these read GDEDESGDSDDEEDDEMSEDDGLENGSSDEEAEEEENAE and DSDDDLERSSAEEGEAEEADESSEEEDCT. The span at 535–550 shows a compositional bias: low complexity; that stretch reads KGISGSKAAGEGSKAG. Phosphoserine is present on Ser552. Residues 588 to 610 are compositionally biased toward acidic residues; it reads FASEDESEESSSLSAEEEDSENE. Phosphoserine occurs at positions 625 and 639. A Glycyl lysine isopeptide (Lys-Gly) (interchain with G-Cter in SUMO2) cross-link involves residue Lys646. The span at 653–667 shows a compositional bias: basic and acidic residues; sequence EENNDSKETSGALKW. Thr708 carries the phosphothreonine modification. Disordered regions lie at residues 787 to 822 and 1178 to 1202; these read ETGDVHKGKSGPNTQNEDIEKEVKEEIDPDEEESAK and NKPKTQAKAGKVPKDRRRPAVIREP. Residue Lys810 forms a Glycyl lysine isopeptide (Lys-Gly) (interchain with G-Cter in SUMO1); alternate linkage. Lys810 is covalently cross-linked (Glycyl lysine isopeptide (Lys-Gly) (interchain with G-Cter in SUMO2); alternate). Lys1206 is covalently cross-linked (Glycyl lysine isopeptide (Lys-Gly) (interchain with G-Cter in SUMO2)). A disordered region spans residues 1219–1282; the sequence is SQKMKKAKEQ…SLKGAEGQLQ (64 aa). A compositionally biased stretch (basic and acidic residues) spans 1228-1248; that stretch reads QRHLHNKEHFRAKQKEEEEKL. Residues 1249-1259 are compositionally biased toward basic residues; sequence KRQKDLRKKLF.

Belongs to the TRAFAC class translation factor GTPase superfamily. Bms1-like GTPase family. BMS1 subfamily. Part of the small subunit (SSU) processome, composed of more than 70 proteins and the RNA chaperone small nucleolar RNA (snoRNA) U3. Interacts with RCL1.

The protein resides in the nucleus. It is found in the nucleolus. The catalysed reaction is GTP + H2O = GDP + phosphate + H(+). Functionally, GTPase required for the synthesis of 40S ribosomal subunits and for processing of pre-ribosomal RNA (pre-rRNA) at sites A0, A1, and A2. Controls access of pre-rRNA intermediates to RCL1 during ribosome biogenesis by binding RCL1 in a GTP-dependent manner, and delivering it to pre-ribosomes. GTP-binding and/or GTP hydrolysis may induce conformational rearrangements within the BMS1-RCL1 complex allowing the interaction of RCL1 with its RNA substrate. Required for RCL1 import into the nucleus. The protein is Ribosome biogenesis protein BMS1 homolog of Homo sapiens (Human).